We begin with the raw amino-acid sequence, 228 residues long: Ribosomal RNA small subunit methyltransferase G (228 aa).

S-adenosyl-L-methionine-binding positions include glycine 89, leucine 94, 140 to 141, and arginine 159; that span reads VE.

Belongs to the methyltransferase superfamily. RNA methyltransferase RsmG family.

The protein localises to the cytoplasm. It carries out the reaction guanosine(527) in 16S rRNA + S-adenosyl-L-methionine = N(7)-methylguanosine(527) in 16S rRNA + S-adenosyl-L-homocysteine. Specifically methylates the N7 position of guanine in position 527 of 16S rRNA. In Burkholderia ambifaria (strain ATCC BAA-244 / DSM 16087 / CCUG 44356 / LMG 19182 / AMMD) (Burkholderia cepacia (strain AMMD)), this protein is Ribosomal RNA small subunit methyltransferase G.